We begin with the raw amino-acid sequence, 182 residues long: Transcription termination/antitermination protein NusG (182 aa).

The 33-residue stretch at 131–163 (VGEQVRIQSGPFANQIGEVQEIEADKFKLTVLV) folds into the KOW domain.

The protein belongs to the NusG family.

Functionally, participates in transcription elongation, termination and antitermination. In Staphylococcus epidermidis (strain ATCC 35984 / DSM 28319 / BCRC 17069 / CCUG 31568 / BM 3577 / RP62A), this protein is Transcription termination/antitermination protein NusG.